Reading from the N-terminus, the 1941-residue chain is WD repeat-containing protein 81 (1941 aa).

A disordered region spans residues 1–27; sequence MAQGSGGREGALRTPAGGWHSPPSPDM. The segment at 1–650 is necessary and sufficient for the interaction with SQSTM1; it reads MAQGSGGREG…TPCEASWTRD (650 aa). The BEACH domain maps to 337-614; sequence GQPTGQEELR…IPKLLVQTIQ (278 aa). 6 disordered regions span residues 618-637, 694-718, 1022-1074, 1097-1217, 1523-1556, and 1569-1602; these read GREDFTENPGQLPNGVGRPV, VASASRPGRRNKAAGADPGEGEEGR, SKDL…VSFH, PQEA…EGKE, PSSRNPASVEPTMPGTGPEWDPHGGGCPQDDGHS, and QIPNDSRPENPGPLGPISGVGGGGLGSGSDDNAL. Polar residues predominate over residues 1137–1146; that stretch reads LRSGDSSQDL. The span at 1151 to 1174 shows a compositional bias: acidic residues; it reads GSEEEEEEEDSCVVLEEEEGEQEE. The segment covering 1586–1595 has biased composition (gly residues); that stretch reads SGVGGGGLGS. 7 WD repeats span residues 1639–1677, 1686–1724, 1729–1769, 1777–1815, 1819–1856, 1860–1896, and 1902–1941; these read IRLQSFPGHSGAVKCVAPLSSEDFFLSGSKDRTVRLWPL, ETAPRLVYTQHRKSVFFVGQLEAPQHVVSCDGAVHVWDP, TLRT…FVDC, EFRLGGGLNPGLVRALAISPSGRSVVAGFSSGFMVLLDT, LVLRGWPAHEGDILQIKAVEGSVLVSSSSDHSLTVWKE, KPTHHYKSASDPIHTFDLYGSEVVTGTVSNKIGVCSL, and QATTKLSSENFRGTLTSLALLPTKRHLLLGSDNGVIRLLA.

The protein belongs to the WD repeat WDR81 family. In terms of assembly, interacts with WDR91; involved in early to late endosome cargo transport. Interacts with BECN1; negatively regulates the PI3 kinase/PI3K activity associated with endosomal membranes. Interacts with SQSTM1; the interaction is direct and regulates the interaction of SQSTM1 with ubiquitinated proteins. Interacts with MAP1LC3C; recruits MAP1LC3C to ubiquitinated protein aggregates in the aggrephagy process. As to expression, widely expressed. In the brain, highest levels in cerebellum and corpus callosum.

Its subcellular location is the early endosome membrane. The protein resides in the late endosome membrane. It localises to the lysosome membrane. The protein localises to the cytoplasmic vesicle. It is found in the autophagosome membrane. Its subcellular location is the mitochondrion. The protein resides in the cytoplasm. It localises to the cytosol. Functionally, functions as a negative regulator of the PI3 kinase/PI3K activity associated with endosomal membranes via BECN1, a core subunit of the PI3K complex. By modifying the phosphatidylinositol 3-phosphate/PtdInsP3 content of endosomal membranes may regulate endosome fusion, recycling, sorting and early to late endosome transport. It is for instance, required for the delivery of cargos like BST2/tetherin from early to late endosome and thereby participates indirectly to their degradation by the lysosome. May also play a role in aggrephagy, the macroautophagic degradation of ubiquitinated protein aggregates. In this process, may regulate the interaction of SQSTM1 with ubiquitinated proteins and also recruit MAP1LC3C. May also be involved in maintenance of normal mitochondrial structure and organization. The polypeptide is WD repeat-containing protein 81 (Homo sapiens (Human)).